Here is a 101-residue protein sequence, read N- to C-terminus: Ubiquitin-related modifier 1 (101 aa).

Glycine 101 carries the 1-thioglycine modification. Glycine 101 participates in a covalent cross-link: Glycyl lysine isopeptide (Gly-Lys) (interchain with K-? in acceptor proteins).

Belongs to the URM1 family. In terms of assembly, component of a complex at least composed of URM1, CTU2/NCS2 and CTU1/ATPBD3. C-terminal thiocarboxylation occurs in 2 steps, it is first acyl-adenylated (-COAMP) via the hesA/moeB/thiF part of MOCS3, then thiocarboxylated (-COSH) via the rhodanese domain of MOCS3.

It is found in the cytoplasm. Its pathway is tRNA modification; 5-methoxycarbonylmethyl-2-thiouridine-tRNA biosynthesis. Acts as a sulfur carrier required for 2-thiolation of mcm(5)S(2)U at tRNA wobble positions of cytosolic tRNA(Lys), tRNA(Glu) and tRNA(Gln). Serves as sulfur donor in tRNA 2-thiolation reaction by being thiocarboxylated (-COSH) at its C-terminus by MOCS3. The sulfur is then transferred to tRNA to form 2-thiolation of mcm(5)S(2)U. Also acts as a ubiquitin-like protein (UBL) that is covalently conjugated via an isopeptide bond to lysine residues of target proteins such as MOCS3, ATPBD3, CTU2, USP15 and CAS. The thiocarboxylated form serves as substrate for conjugation and oxidative stress specifically induces the formation of UBL-protein conjugates. The polypeptide is Ubiquitin-related modifier 1 (Bos taurus (Bovine)).